Reading from the N-terminus, the 379-residue chain is MPTAFPPDSVGLVTPQIAHFSEPLALACGRALPAYDLIYETYGQLNASASNAVLICHALSGHHHAAGYHSVDDRKPGWWDSCIGPGKPIDTNRFFVVSLNNLGGCNGSTGPSSLNPDTGKPFGADFPVLTVEDWVHSQARLADRLGISQWAAVIGGSLGGMQALQWTITYPDRVRHCLAIASAPKLSAQNIAFNEVARQAILTDPEFHGGSFQEQGVIPKRGLMLARMVGHITYLSDDSMGEKFGRGLKSEKLNYDFHSVEFQVESYLRYQGEEFSGRFDANTYLLMTKALDYFDPAANCDDDLAKTFAHATAKFCVMSFTTDWRFSPARSRELVDALMAARKDVCYLEIDAPQGHDAFLIPIPRYLQAFSHYMNRITL.

An AB hydrolase-1 domain is found at 51 to 360 (NAVLICHALS…DAPQGHDAFL (310 aa)). The active-site Nucleophile is the Ser-157. Substrate is bound at residue Arg-227. Residues Asp-323 and His-356 contribute to the active site. Asp-357 is a substrate binding site.

Belongs to the AB hydrolase superfamily. MetX family. In terms of assembly, homodimer.

It is found in the cytoplasm. It carries out the reaction L-homoserine + succinyl-CoA = O-succinyl-L-homoserine + CoA. It participates in amino-acid biosynthesis; L-methionine biosynthesis via de novo pathway; O-succinyl-L-homoserine from L-homoserine: step 1/1. In terms of biological role, transfers a succinyl group from succinyl-CoA to L-homoserine, forming succinyl-L-homoserine. This is Homoserine O-succinyltransferase from Pseudomonas fluorescens (strain ATCC BAA-477 / NRRL B-23932 / Pf-5).